The primary structure comprises 438 residues: Serine/threonine exchanger SteT (438 aa).

Over methionine 1–glutamate 11 the chain is Cytoplasmic. Residues isoleucine 12 to methionine 32 form a helical membrane-spanning segment. Over lysine 33–lysine 45 the chain is Extracellular. A helical transmembrane segment spans residues methionine 46–alanine 66. At glutamate 67–glutamine 98 the chain is on the cytoplasmic side. The helical transmembrane segment at isoleucine 99–alanine 119 threads the bilayer. At asparagine 120–serine 126 the chain is on the extracellular side. A helical transmembrane segment spans residues glycine 127–glycine 147. Over threonine 148–glycine 151 the chain is Cytoplasmic. The helical transmembrane segment at glycine 152–phenylalanine 172 threads the bilayer. At glycine 173–asparagine 193 the chain is on the extracellular side. Residues phenylalanine 194–leucine 214 form a helical membrane-spanning segment. Residues glycine 215–threonine 230 are Cytoplasmic-facing. A helical membrane pass occupies residues glycine 231–leucine 251. Residues serine 252–threonine 269 lie on the Extracellular side of the membrane. Residues methionine 270–glycine 290 traverse the membrane as a helical segment. The Cytoplasmic portion of the chain corresponds to cysteine 291–threonine 327. The helical transmembrane segment at proline 328–proline 348 threads the bilayer. The Extracellular segment spans residues aspartate 349–serine 352. Residues glutamate 353 to leucine 373 traverse the membrane as a helical segment. Residues arginine 374–leucine 388 lie on the Cytoplasmic side of the membrane. Residues tyrosine 389 to isoleucine 409 form a helical membrane-spanning segment. Residues threonine 410–aspartate 411 are Extracellular-facing. A helical transmembrane segment spans residues threonine 412–methionine 432. Residues lysine 433–serine 438 are Cytoplasmic-facing.

The protein belongs to the amino acid-polyamine-organocation (APC) superfamily. L-type amino acid transporter (LAT) (TC 2.A.3.8) family. Monomer.

The protein resides in the cell membrane. Exhibits an obligate exchange activity for serine, threonine and aromatic amino acids. The protein is Serine/threonine exchanger SteT (steT) of Bacillus subtilis (strain 168).